An 84-amino-acid polypeptide reads, in one-letter code: Large ribosomal subunit protein bL28 (84 aa).

The protein belongs to the bacterial ribosomal protein bL28 family.

This Clostridium perfringens (strain 13 / Type A) protein is Large ribosomal subunit protein bL28.